Consider the following 340-residue polypeptide: Fructose-1,6-bisphosphatase class 1 (340 aa).

Residues Glu-107, Asp-126, Leu-128, and Asp-129 each coordinate Mg(2+). Asn-215 lines the substrate pocket. Mg(2+) is bound at residue Glu-287.

It belongs to the FBPase class 1 family. Homotetramer. The cofactor is Mg(2+).

The protein resides in the cytoplasm. The enzyme catalyses beta-D-fructose 1,6-bisphosphate + H2O = beta-D-fructose 6-phosphate + phosphate. Its pathway is carbohydrate biosynthesis; gluconeogenesis. The protein is Fructose-1,6-bisphosphatase class 1 of Brucella anthropi (strain ATCC 49188 / DSM 6882 / CCUG 24695 / JCM 21032 / LMG 3331 / NBRC 15819 / NCTC 12168 / Alc 37) (Ochrobactrum anthropi).